The sequence spans 566 residues: Arginine--tRNA ligase (566 aa).

Positions 123–133 match the 'HIGH' region motif; it reads PNIAKPFHIGH.

The protein belongs to the class-I aminoacyl-tRNA synthetase family. In terms of assembly, monomer.

The protein resides in the cytoplasm. It catalyses the reaction tRNA(Arg) + L-arginine + ATP = L-arginyl-tRNA(Arg) + AMP + diphosphate. This is Arginine--tRNA ligase from Clostridioides difficile (strain 630) (Peptoclostridium difficile).